Consider the following 155-residue polypeptide: Small ribosomal subunit protein uS7 (155 aa).

It belongs to the universal ribosomal protein uS7 family. In terms of assembly, part of the 30S ribosomal subunit. Contacts proteins S9 and S11.

In terms of biological role, one of the primary rRNA binding proteins, it binds directly to 16S rRNA where it nucleates assembly of the head domain of the 30S subunit. Is located at the subunit interface close to the decoding center, probably blocks exit of the E-site tRNA. The chain is Small ribosomal subunit protein uS7 from Helicobacter hepaticus (strain ATCC 51449 / 3B1).